Consider the following 358-residue polypeptide: Alanine racemase (358 aa).

The Proton acceptor; specific for D-alanine role is filled by K34. Residue K34 is modified to N6-(pyridoxal phosphate)lysine. A substrate-binding site is contributed by R129. The active-site Proton acceptor; specific for L-alanine is Y254. M302 serves as a coordination point for substrate.

It belongs to the alanine racemase family. Pyridoxal 5'-phosphate is required as a cofactor.

It catalyses the reaction L-alanine = D-alanine. It participates in amino-acid biosynthesis; D-alanine biosynthesis; D-alanine from L-alanine: step 1/1. Its function is as follows. Catalyzes the interconversion of L-alanine and D-alanine. May also act on other amino acids. This is Alanine racemase (alr) from Vibrio parahaemolyticus serotype O3:K6 (strain RIMD 2210633).